The chain runs to 103 residues: Iron-sulfur cluster assembly protein CyaY (103 aa).

This sequence belongs to the frataxin family.

Its function is as follows. Involved in iron-sulfur (Fe-S) cluster assembly. May act as a regulator of Fe-S biogenesis. This chain is Iron-sulfur cluster assembly protein CyaY, found in Rickettsia rickettsii (strain Iowa).